Here is a 192-residue protein sequence, read N- to C-terminus: Protein GrpE (192 aa).

The span at methionine 1–glutamine 20 shows a compositional bias: basic and acidic residues. The tract at residues methionine 1 to valine 34 is disordered. The span at valine 25–valine 34 shows a compositional bias: acidic residues.

The protein belongs to the GrpE family. In terms of assembly, homodimer.

The protein localises to the cytoplasm. Participates actively in the response to hyperosmotic and heat shock by preventing the aggregation of stress-denatured proteins, in association with DnaK and GrpE. It is the nucleotide exchange factor for DnaK and may function as a thermosensor. Unfolded proteins bind initially to DnaJ; upon interaction with the DnaJ-bound protein, DnaK hydrolyzes its bound ATP, resulting in the formation of a stable complex. GrpE releases ADP from DnaK; ATP binding to DnaK triggers the release of the substrate protein, thus completing the reaction cycle. Several rounds of ATP-dependent interactions between DnaJ, DnaK and GrpE are required for fully efficient folding. This Bacillus cereus (strain AH187) protein is Protein GrpE.